The sequence spans 369 residues: Anhydro-N-acetylmuramic acid kinase (369 aa).

ATP is bound at residue G12–D19.

This sequence belongs to the anhydro-N-acetylmuramic acid kinase family.

The catalysed reaction is 1,6-anhydro-N-acetyl-beta-muramate + ATP + H2O = N-acetyl-D-muramate 6-phosphate + ADP + H(+). Its pathway is amino-sugar metabolism; 1,6-anhydro-N-acetylmuramate degradation. It participates in cell wall biogenesis; peptidoglycan recycling. Its function is as follows. Catalyzes the specific phosphorylation of 1,6-anhydro-N-acetylmuramic acid (anhMurNAc) with the simultaneous cleavage of the 1,6-anhydro ring, generating MurNAc-6-P. Is required for the utilization of anhMurNAc either imported from the medium or derived from its own cell wall murein, and thus plays a role in cell wall recycling. The sequence is that of Anhydro-N-acetylmuramic acid kinase from Escherichia coli O6:K15:H31 (strain 536 / UPEC).